Reading from the N-terminus, the 1634-residue chain is Leucine-rich repeat-containing protein 37A3 (1634 aa).

Positions 1-35 (MTSAQCPALACVMSPLRFWGPWPLLMWQLLWLLVK) are cleaved as a signal peptide. The Extracellular segment spans residues 36–1581 (EAQPLEWVKD…ELPGYGYTKK (1546 aa)). Disordered stretches follow at residues 53-104 (PLGP…ESTE), 129-154 (SQQDLKDKLSPQERLPVSPKKLKKDP), 172-531 (TPQS…VVVA), 619-642 (PEPTTEVGHSTPPKRTIVSPKHPE), and 758-777 (EPTTETGHSTALEKTTAPRP). An LRR 1 repeat occupies 137 to 160 (LSPQERLPVSPKKLKKDPAQRWSL). Polar residues-rich tracts occupy residues 172-189 (TPQSQKQTLQNEYSSTDT) and 223-237 (ETQNPETLEDIQSSS). LRR repeat units follow at residues 230 to 253 (LEDIQSSSLQQEAPAQLPQLLEEE) and 267 to 290 (ESSMESLTLPNHEVSVQPPGEDQA). The segment covering 238 to 249 (LQQEAPAQLPQL) has biased composition (low complexity). An N-linked (GlcNAc...) asparagine glycan is attached at Asn-296. Positions 307–326 (TITSEPTNETESSQAQQETP) are enriched in polar residues. The segment covering 358–368 (SEQQQPVQPSE) has biased composition (low complexity). Over residues 433–446 (LVHQEATTRLSGSG) the composition is skewed to polar residues. Residues 482–493 (SPEPINNENPSP) are compositionally biased toward low complexity. Positions 760–770 (TTETGHSTALE) are enriched in polar residues. 6 LRR repeats span residues 864–887 (NGTFTILNFQGNYISYIDGNVWKA), 888–911 (YSWTEKLILRENNLTELHKDSFEG), 912–935 (LLSLQYLDLSCNKIQSIERHTFEP), 937–959 (PFLKFINLSCNVITELSFGTFQA), 963–987 (MQFLHKLILNHNPLTTVEDPYLFKL), and 1002–1027 (LTTLKNILMMTVELEKLIVPSHMACC). Asn-1079 is a glycosylation site (N-linked (GlcNAc...) asparagine). 2 LRR repeats span residues 1124–1146 (LPYFSAVNLDVKSLLLPFIKLPT) and 1151–1176 (LAKIQTVGKNRQRLNRVLMGPRSIQK). Basic and acidic residues-rich tracts occupy residues 1181–1191 (EVGRQSIRREQ) and 1201–1216 (AEEKRLGSPAPRELKQ). Disordered stretches follow at residues 1181-1227 (EVGR…EKLA) and 1306-1329 (RFHKTRSRMTHRTPKVKKSPKVRK). The LRR 12 repeat unit spans residues 1359 to 1384 (FSSLRDLSPQENPFLEVSAPSEHFIE). A helical membrane pass occupies residues 1582-1602 (LILALIVTGILTILIILLCLI). The Cytoplasmic segment spans residues 1603 to 1634 (EICCHRRSLQEDEEGFSRDSEAPTEEESEALP). Residues 1614-1634 (DEEGFSRDSEAPTEEESEALP) are disordered. A compositionally biased stretch (acidic residues) spans 1624-1634 (APTEEESEALP).

This sequence belongs to the LRRC37A family.

Its subcellular location is the membrane. This is Leucine-rich repeat-containing protein 37A3 (LRRC37A3) from Homo sapiens (Human).